The chain runs to 365 residues: GTPase Obg (365 aa).

Residues 2 to 160 enclose the Obg domain; the sequence is ESFVDEVAIE…KFLRLSLKLL (159 aa). The region spanning 161 to 329 is the OBG-type G domain; it reads ADVGIVGLPN…LLEAMDEAFF (169 aa). Residues 167–174, 192–196, 215–218, 282–285, and 310–312 contribute to the GTP site; these read GLPNAGKS, FTTLS, DIPG, NKID, and SAD. Positions 174 and 194 each coordinate Mg(2+).

Belongs to the TRAFAC class OBG-HflX-like GTPase superfamily. OBG GTPase family. Monomer. Requires Mg(2+) as cofactor.

It localises to the cytoplasm. In terms of biological role, an essential GTPase which binds GTP, GDP and possibly (p)ppGpp with moderate affinity, with high nucleotide exchange rates and a fairly low GTP hydrolysis rate. Plays a role in control of the cell cycle, stress response, ribosome biogenesis and in those bacteria that undergo differentiation, in morphogenesis control. In Leptospira borgpetersenii serovar Hardjo-bovis (strain JB197), this protein is GTPase Obg.